The sequence spans 273 residues: Large ribosomal subunit protein uL2 (273 aa).

The tract at residues 221-273 (RGTAMNPVDHPHGGGEGRNFGKHPVTPWGIQTKGKKTRSNKRTDKFIVRRRSK) is disordered.

It belongs to the universal ribosomal protein uL2 family. Part of the 50S ribosomal subunit. Forms a bridge to the 30S subunit in the 70S ribosome.

In terms of biological role, one of the primary rRNA binding proteins. Required for association of the 30S and 50S subunits to form the 70S ribosome, for tRNA binding and peptide bond formation. It has been suggested to have peptidyltransferase activity; this is somewhat controversial. Makes several contacts with the 16S rRNA in the 70S ribosome. This chain is Large ribosomal subunit protein uL2, found in Sodalis glossinidius (strain morsitans).